A 474-amino-acid polypeptide reads, in one-letter code: E3 ubiquitin-protein ligase rnf168 (474 aa).

Residues 1 to 12 (MPPVSEVDRGPV) show a composition bias toward basic and acidic residues. Residues 1-20 (MPPVSEVDRGPVEESSGGLK) form a disordered region. Residues 26-65 (CPVCLEIFLEPVTLPCMHTFCKPCFLETVDKSNMCCPLCR) form an RING-type zinc finger. The short motif at 119 to 137 (VCQPGELRKEYEDQISKLV) is the LR motif 1 element. A UMI motif motif is present at residues 152–160 (EEYIQRLLA). The MIU motif 1 signature appears at 174-195 (EEQQLENDEKLARLLSLELNSG). The segment covering 192 to 203 (LNSGPASESTCN) has biased composition (polar residues). Disordered regions lie at residues 192-259 (LNSG…KPLS) and 367-474 (IQKE…NMGS). Positions 233-243 (PSSSDSSPDSS) are enriched in low complexity. The MIU motif 2 motif lies at 353 to 376 (RWQQEEEDRRLALRIQKELDRENS). Residues 367–383 (IQKELDRENSVDRRKGS) show a composition bias toward basic and acidic residues. The LR motif 2 motif lies at 379–390 (RRKGSADSYQLR). 2 stretches are compositionally biased toward polar residues: residues 385-402 (DSYQLRQKNTSVSTTTSP) and 409-418 (KGSNTTTAKN). Basic and acidic residues predominate over residues 422 to 432 (RRGEEKTEKRL). Residues 443-457 (VKTPVSSTAVSSTVK) are compositionally biased toward low complexity.

It belongs to the RNF168 family. Monomer.

The protein resides in the nucleus. The enzyme catalyses S-ubiquitinyl-[E2 ubiquitin-conjugating enzyme]-L-cysteine + [acceptor protein]-L-lysine = [E2 ubiquitin-conjugating enzyme]-L-cysteine + N(6)-ubiquitinyl-[acceptor protein]-L-lysine.. Its pathway is protein modification; protein ubiquitination. Functionally, E3 ubiquitin-protein ligase required for accumulation of repair proteins to sites of DNA damage. Acts with ube2n/ubc13 to amplify the rnf8-dependent histone ubiquitination. Recruited to sites of DNA damage at double-strand breaks (DSBs) by binding to ubiquitinated histone H2A and ubiquitinates histone H2A and H2AX, leading to amplify the rnf8-dependent H2A ubiquitination and promoting the formation of 'Lys-63'-linked ubiquitin conjugates. This leads to concentrate ubiquitinated histones H2A and H2AX at DNA lesions. Catalyzes monoubiquitination of 'Lys-13' and 'Lys-15' of nucleosomal histone H2A (H2AK13Ub and H2AK15Ub, respectively). The sequence is that of E3 ubiquitin-protein ligase rnf168 from Danio rerio (Zebrafish).